Reading from the N-terminus, the 181-residue chain is Oligoribonuclease (181 aa).

One can recognise an Exonuclease domain in the interval 8-171 (LIWIDMEMTG…ADIYDSIEEL (164 aa)). Residue Y129 is part of the active site.

Belongs to the oligoribonuclease family.

The protein resides in the cytoplasm. 3'-to-5' exoribonuclease specific for small oligoribonucleotides. The polypeptide is Oligoribonuclease (Nitrosomonas eutropha (strain DSM 101675 / C91 / Nm57)).